Here is a 281-residue protein sequence, read N- to C-terminus: 33 kDa chaperonin (281 aa).

2 cysteine pairs are disulfide-bonded: Cys-229-Cys-231 and Cys-262-Cys-265.

The protein belongs to the HSP33 family. Post-translationally, under oxidizing conditions two disulfide bonds are formed involving the reactive cysteines. Under reducing conditions zinc is bound to the reactive cysteines and the protein is inactive.

It is found in the cytoplasm. In terms of biological role, redox regulated molecular chaperone. Protects both thermally unfolding and oxidatively damaged proteins from irreversible aggregation. Plays an important role in the bacterial defense system toward oxidative stress. This Pseudoalteromonas translucida (strain TAC 125) protein is 33 kDa chaperonin.